The chain runs to 449 residues: tRNA (guanine(37)-N(1))-methyltransferase (449 aa).

S-adenosyl-L-methionine is bound by residues H216, 254–255 (DL), 282–283 (DG), and N345.

The protein belongs to the class I-like SAM-binding methyltransferase superfamily. TRM5/TYW2 family. In terms of assembly, monomer.

Its subcellular location is the mitochondrion matrix. It is found in the nucleus. The protein localises to the cytoplasm. The enzyme catalyses guanosine(37) in tRNA + S-adenosyl-L-methionine = N(1)-methylguanosine(37) in tRNA + S-adenosyl-L-homocysteine + H(+). In terms of biological role, specifically methylates the N1 position of guanosine-37 in various cytoplasmic and mitochondrial tRNAs. Methylation is not dependent on the nature of the nucleoside 5' of the target nucleoside. This is the first step in the biosynthesis of wybutosine (yW), a modified base adjacent to the anticodon of tRNAs and required for accurate decoding. The polypeptide is tRNA (guanine(37)-N(1))-methyltransferase (Candida albicans (strain SC5314 / ATCC MYA-2876) (Yeast)).